The chain runs to 65 residues: Muscarinic m1-toxin2 (65 aa).

4 disulfide bridges follow: Cys3-Cys24, Cys17-Cys42, Cys46-Cys57, and Cys58-Cys63.

The protein belongs to the three-finger toxin family. Short-chain subfamily. Aminergic toxin sub-subfamily. As to quaternary structure, monomer. As to expression, expressed by the venom gland.

It localises to the secreted. Its function is as follows. Binds irreversibly and specifically to M1 (CHRM1) muscarinic acetylcholine receptors, blocking further binding of antagonists and preventing the action of agonists. The chain is Muscarinic m1-toxin2 from Dendroaspis angusticeps (Eastern green mamba).